The following is a 255-amino-acid chain: MRPTVLCFSGLDPSGGAGLQADIEAIGQSGAHAAIACTALTIQNSQQVFGFEATSKELLLAQANAVVGDLPIKCVKSGMLGTTDNIAALAEFLRAHPDYQYVLDPVLVANSGGSLGDQATLVKAFVELIPLATLITPNTVELRALTGVTDLDQATQKLFEMGAKAVLVKGGHEDTPDFIKNSLYIDGELAASSTCPRLEGEYHGSGCSLASFIAGRLALGDSLKIAVQHAETWLFGVLKNAETPVLNGQKIPKRF.

Pyridoxal 5'-phosphate is bound by residues glycine 18, glutamine 43, and asparagine 110. Position 43 (glutamine 43) interacts with 4-amino-5-hydroxymethyl-2-methylpyrimidine. Cysteine 195 and cysteine 207 are joined by a disulfide. Serine 208 contacts pyridoxal 5'-phosphate.

The protein belongs to the ThiD family. In terms of assembly, homodimer. In terms of processing, crystals show a disulfide bond between Cys-195 and Cys-207. This disulfide is possibly an artifact of the purification and crystallization conditions. However, as it is adjacent to the conserved GSGC of the oxyanion hole, this disulfide may help to orient the backbone amides toward the oxanion intermediate.

It carries out the reaction 4-amino-5-hydroxymethyl-2-methylpyrimidine + ATP = 4-amino-2-methyl-5-(phosphooxymethyl)pyrimidine + ADP + H(+). It participates in cofactor biosynthesis; thiamine diphosphate biosynthesis. Its activity is regulated as follows. Inhibited by pyridoxal phosphate at high micromolar concentrations. In terms of biological role, catalyzes the phosphorylation of hydroxymethylpyrimidine (HMP) to hydroxymethylpyrimidine phosphate (HMP-P). Unlike other HMPKs, it cannot catalyze the phosphorylation of HMP-P to generate the diphosphate HMP-PP. Shows no activity with pyridoxal, pyridoxamine or pyridoxine. Does not show phosphatase activity. The sequence is that of Hydroxylmethylpyrimidine kinase from Acinetobacter baumannii (strain IS-123).